The chain runs to 255 residues: Flagellar brake protein YcgR (255 aa).

Positions 122–240 (QRRTYFRINT…ERDLQQVIFE (119 aa)) constitute a PilZ domain.

It belongs to the YcgR family. In terms of assembly, monomer. Interacts with the flagellar basal bodies.

Its subcellular location is the bacterial flagellum basal body. Acts as a flagellar brake, regulating swimming and swarming in a bis-(3'-5') cyclic diguanylic acid (c-di-GMP)-dependent manner. Binds 1 c-di-GMP dimer per subunit. Increasing levels of c-di-GMP lead to decreased motility. In Pectobacterium carotovorum subsp. carotovorum (strain PC1), this protein is Flagellar brake protein YcgR.